The sequence spans 306 residues: Agmatinase (306 aa).

6 residues coordinate Mn(2+): His-126, Asp-149, His-151, Asp-153, Asp-230, and Asp-232.

The protein belongs to the arginase family. Agmatinase subfamily. The cofactor is Mn(2+).

The catalysed reaction is agmatine + H2O = urea + putrescine. It participates in amine and polyamine biosynthesis; putrescine biosynthesis via agmatine pathway; putrescine from agmatine: step 1/1. Catalyzes the formation of putrescine from agmatine. This chain is Agmatinase, found in Salmonella dublin (strain CT_02021853).